Here is a 423-residue protein sequence, read N- to C-terminus: Tumor necrosis factor receptor superfamily member 19 (423 aa).

Residues 1–29 form the signal peptide; that stretch reads MALKVLLEQEKTFFTLLVLLGYLSCKVTC. At 30-170 the chain is on the extracellular side; the sequence is ESGDCRQQEF…TASSPRDTAL (141 aa). 3 TNFR-Cys repeats span residues 33–72, 74–114, and 116–149; these read DCRQQEFRDRSGNCVPCNQCGPGMELSKECGFGYGEDAQC, TCRL…DAIC, and DCLPGFYRKTKLVGFQDMECVPCGDPPPPYEPHC. 8 disulfides stabilise this stretch: Cys-34/Cys-46, Cys-49/Cys-62, Cys-52/Cys-72, Cys-75/Cys-89, Cys-92/Cys-106, Cys-95/Cys-114, Cys-117/Cys-135, and Cys-138/Cys-149. N-linked (GlcNAc...) asparagine glycosylation is present at Asn-105. A helical membrane pass occupies residues 171–191; the sequence is AAVICSALATVLLALLILCVI. Residues 192–423 lie on the Cytoplasmic side of the membrane; that stretch reads YCKRQFMEKK…LQVRQRLGSL (232 aa).

Associates with TRAF1, TRAF2, TRAF3 and TRAF5. Interacts with LINGO1. Highly expressed in prostate. Detected at lower levels in thymus, spleen, testis, uterus, small intestine, colon and peripheral blood leukocytes.

It is found in the membrane. Functionally, can mediate activation of JNK and NF-kappa-B. May promote caspase-independent cell death. This is Tumor necrosis factor receptor superfamily member 19 (TNFRSF19) from Homo sapiens (Human).